Here is a 334-residue protein sequence, read N- to C-terminus: Ribosomal RNA small subunit methyltransferase H (334 aa).

S-adenosyl-L-methionine-binding positions include 53–55, D72, F99, D122, and H129; that span reads GGH.

It belongs to the methyltransferase superfamily. RsmH family.

It is found in the cytoplasm. The enzyme catalyses cytidine(1402) in 16S rRNA + S-adenosyl-L-methionine = N(4)-methylcytidine(1402) in 16S rRNA + S-adenosyl-L-homocysteine + H(+). In terms of biological role, specifically methylates the N4 position of cytidine in position 1402 (C1402) of 16S rRNA. In Leptospira interrogans serogroup Icterohaemorrhagiae serovar Lai (strain 56601), this protein is Ribosomal RNA small subunit methyltransferase H.